The chain runs to 488 residues: Ribulose bisphosphate carboxylase large chain 2 (488 aa).

The substrate site is built by asparagine 128 and threonine 178. The Proton acceptor role is filled by lysine 180. Lysine 182 serves as a coordination point for substrate. Mg(2+) contacts are provided by lysine 206, aspartate 208, and glutamate 209. The residue at position 206 (lysine 206) is an N6-carboxylysine. Catalysis depends on histidine 298, which acts as the Proton acceptor. Substrate is bound by residues arginine 299, histidine 331, and serine 383.

Belongs to the RuBisCO large chain family. Type I subfamily. In terms of assembly, heterohexadecamer of 8 large chains and 8 small chains. Requires Mg(2+) as cofactor.

The catalysed reaction is 2 (2R)-3-phosphoglycerate + 2 H(+) = D-ribulose 1,5-bisphosphate + CO2 + H2O. It catalyses the reaction D-ribulose 1,5-bisphosphate + O2 = 2-phosphoglycolate + (2R)-3-phosphoglycerate + 2 H(+). Functionally, ruBisCO catalyzes two reactions: the carboxylation of D-ribulose 1,5-bisphosphate, the primary event in carbon dioxide fixation, as well as the oxidative fragmentation of the pentose substrate. Both reactions occur simultaneously and in competition at the same active site. In Nitrobacter hamburgensis (strain DSM 10229 / NCIMB 13809 / X14), this protein is Ribulose bisphosphate carboxylase large chain 2.